A 432-amino-acid polypeptide reads, in one-letter code: 3-phosphoshikimate 1-carboxyvinyltransferase (432 aa).

3 residues coordinate 3-phosphoshikimate: lysine 23, serine 24, and arginine 28. A phosphoenolpyruvate-binding site is contributed by lysine 23. Residues glycine 95 and arginine 123 each coordinate phosphoenolpyruvate. The 3-phosphoshikimate site is built by serine 167, glutamine 169, aspartate 316, and lysine 343. A phosphoenolpyruvate-binding site is contributed by glutamine 169. Aspartate 316 acts as the Proton acceptor in catalysis. 2 residues coordinate phosphoenolpyruvate: arginine 347 and arginine 391.

The protein belongs to the EPSP synthase family. Monomer.

It is found in the cytoplasm. It catalyses the reaction 3-phosphoshikimate + phosphoenolpyruvate = 5-O-(1-carboxyvinyl)-3-phosphoshikimate + phosphate. Its pathway is metabolic intermediate biosynthesis; chorismate biosynthesis; chorismate from D-erythrose 4-phosphate and phosphoenolpyruvate: step 6/7. Functionally, catalyzes the transfer of the enolpyruvyl moiety of phosphoenolpyruvate (PEP) to the 5-hydroxyl of shikimate-3-phosphate (S3P) to produce enolpyruvyl shikimate-3-phosphate and inorganic phosphate. In Limosilactobacillus fermentum (strain NBRC 3956 / LMG 18251) (Lactobacillus fermentum), this protein is 3-phosphoshikimate 1-carboxyvinyltransferase.